Consider the following 136-residue polypeptide: Probable endoribonuclease MazF7 (136 aa).

A disordered region spans residues 115-136 (TGPERGEAATHSPVRWTGGRDP).

Belongs to the PemK/MazF family. Forms a complex with cognate antitoxin MazE7.

Functionally, toxic component of a type II toxin-antitoxin (TA) system. Upon expression in E.coli and M.smegmatis inhibits cell growth and colony formation. Its toxic effect is neutralized by coexpression with cognate antitoxin MazE7. Probably an endoribonuclease. The polypeptide is Probable endoribonuclease MazF7 (mazF7) (Mycobacterium tuberculosis (strain ATCC 25618 / H37Rv)).